Reading from the N-terminus, the 107-residue chain is Thiosulfate sulfurtransferase GlpE (107 aa).

A Rhodanese domain is found at 17 to 105 (RQGEAVLVDI…WLKAFPLETE (89 aa)). Cys-65 functions as the Cysteine persulfide intermediate in the catalytic mechanism.

The protein belongs to the GlpE family.

It is found in the cytoplasm. It catalyses the reaction thiosulfate + hydrogen cyanide = thiocyanate + sulfite + 2 H(+). It carries out the reaction thiosulfate + [thioredoxin]-dithiol = [thioredoxin]-disulfide + hydrogen sulfide + sulfite + 2 H(+). In terms of biological role, transferase that catalyzes the transfer of sulfur from thiosulfate to thiophilic acceptors such as cyanide or dithiols. May function in a CysM-independent thiosulfate assimilation pathway by catalyzing the conversion of thiosulfate to sulfite, which can then be used for L-cysteine biosynthesis. The polypeptide is Thiosulfate sulfurtransferase GlpE (Sodalis glossinidius (strain morsitans)).